We begin with the raw amino-acid sequence, 232 residues long: MSFENKLPTPLENNDAKGHMVCTLNKTTDARRAAETLSIAFSNSPAFHFICKKILNIPLAEKVPTRTITTDIISPFLDSPYGEISEVNTFDAVAVWSLPPHVPKARSNDAKFNKDFIDDLNARVKQVIPNGINYYYLFCIGKNLNEKGIRGSVRTIFEEYKRRADEENCAIVLEAIAEHAKSVYEYFGFRNYMTFKYGECEVDSNGNCDPNGEGFTAYLMIYHKDGNKVLKE.

It is found in the cytoplasm. The protein localises to the nucleus. This is an uncharacterized protein from Saccharomyces cerevisiae (strain ATCC 204508 / S288c) (Baker's yeast).